The following is a 668-amino-acid chain: DNA damage-responsive serine/threonine-protein kinase RqkA (668 aa).

The region spanning Tyr-13 to Ala-272 is the Protein kinase domain. ATP is bound by residues Leu-19–Val-27 and Lys-42. Asp-137 serves as the catalytic Proton acceptor.

It belongs to the protein kinase superfamily. Ser/Thr protein kinase family. The cofactor is pyrroloquinoline quinone. In terms of processing, autophosphorylated.

The enzyme catalyses L-seryl-[protein] + ATP = O-phospho-L-seryl-[protein] + ADP + H(+). It catalyses the reaction L-threonyl-[protein] + ATP = O-phospho-L-threonyl-[protein] + ADP + H(+). With respect to regulation, autokinase activity is stimulated by DNA damage. Stimulated by PQQ and DNA ends in vitro. Functionally, plays an important role in radiation resistance and DNA double-strand break (DSB) repair. Involved in transcriptional regulation of genes important for bacterial stress response. Phosphorylates PprA in vitro. This is DNA damage-responsive serine/threonine-protein kinase RqkA (rqkA) from Deinococcus radiodurans (strain ATCC 13939 / DSM 20539 / JCM 16871 / CCUG 27074 / LMG 4051 / NBRC 15346 / NCIMB 9279 / VKM B-1422 / R1).